Here is a 435-residue protein sequence, read N- to C-terminus: Probable exopolygalacturonase B (435 aa).

The N-terminal stretch at Met1 to Ser15 is a signal peptide. 3 N-linked (GlcNAc...) asparagine glycosylation sites follow: Asn59, Asn184, and Asn224. PbH1 repeat units lie at residues Ser208–Asn239, Val240–Pro261, Asn262–Ser283, Ile294–Ala315, and Ile326–Gln347. Residue Asp254 is the Proton donor of the active site. Residues Cys256 and Cys273 are joined by a disulfide bond. Asn262 and Asn274 each carry an N-linked (GlcNAc...) asparagine glycan. The active site involves His277. Residues Asn301, Asn328, Asn365, and Asn373 are each glycosylated (N-linked (GlcNAc...) asparagine). The PbH1 6 repeat unit spans residues Val366–Asp388. Cys391 and Cys397 are oxidised to a cystine. Asn406 carries N-linked (GlcNAc...) asparagine glycosylation.

It belongs to the glycosyl hydrolase 28 family.

It is found in the secreted. It catalyses the reaction [(1-&gt;4)-alpha-D-galacturonosyl](n) + H2O = alpha-D-galacturonate + [(1-&gt;4)-alpha-D-galacturonosyl](n-1). Specific in hydrolyzing the terminal glycosidic bond of polygalacturonic acid and oligogalacturonates. This is Probable exopolygalacturonase B (pgxB) from Aspergillus flavus (strain ATCC 200026 / FGSC A1120 / IAM 13836 / NRRL 3357 / JCM 12722 / SRRC 167).